Consider the following 199-residue polypeptide: Glycerol-3-phosphate acyltransferase (199 aa).

5 consecutive transmembrane segments (helical) span residues 5–25 (AYLL…IIFC), 54–74 (AAIG…LIAF), 82–102 (AIGL…FFQF), 114–134 (VFFS…LIVF), and 154–174 (YIWC…CLLI).

It belongs to the PlsY family. Probably interacts with PlsX.

It is found in the cell inner membrane. It carries out the reaction an acyl phosphate + sn-glycerol 3-phosphate = a 1-acyl-sn-glycero-3-phosphate + phosphate. It functions in the pathway lipid metabolism; phospholipid metabolism. Catalyzes the transfer of an acyl group from acyl-phosphate (acyl-PO(4)) to glycerol-3-phosphate (G3P) to form lysophosphatidic acid (LPA). This enzyme utilizes acyl-phosphate as fatty acyl donor, but not acyl-CoA or acyl-ACP. This is Glycerol-3-phosphate acyltransferase from Haemophilus ducreyi (strain 35000HP / ATCC 700724).